Consider the following 321-residue polypeptide: Lipoyl synthase (321 aa).

The tract at residues 1–21 (MRHRWEDRPVAPPPDGRPTEY) is disordered. The [4Fe-4S] cluster site is built by Cys-63, Cys-68, Cys-74, Cys-89, Cys-93, Cys-96, and Ser-302. In terms of domain architecture, Radical SAM core spans 75–291 (WNNRTATFMI…KKLGLEMGFS (217 aa)). The interval 301-321 (SSYHAHEQTEDARRGALGARG) is disordered. Over residues 304–314 (HAHEQTEDARR) the composition is skewed to basic and acidic residues.

Belongs to the radical SAM superfamily. Lipoyl synthase family. [4Fe-4S] cluster is required as a cofactor.

It localises to the cytoplasm. It catalyses the reaction [[Fe-S] cluster scaffold protein carrying a second [4Fe-4S](2+) cluster] + N(6)-octanoyl-L-lysyl-[protein] + 2 oxidized [2Fe-2S]-[ferredoxin] + 2 S-adenosyl-L-methionine + 4 H(+) = [[Fe-S] cluster scaffold protein] + N(6)-[(R)-dihydrolipoyl]-L-lysyl-[protein] + 4 Fe(3+) + 2 hydrogen sulfide + 2 5'-deoxyadenosine + 2 L-methionine + 2 reduced [2Fe-2S]-[ferredoxin]. Its pathway is protein modification; protein lipoylation via endogenous pathway; protein N(6)-(lipoyl)lysine from octanoyl-[acyl-carrier-protein]: step 2/2. Catalyzes the radical-mediated insertion of two sulfur atoms into the C-6 and C-8 positions of the octanoyl moiety bound to the lipoyl domains of lipoate-dependent enzymes, thereby converting the octanoylated domains into lipoylated derivatives. In Rubrobacter xylanophilus (strain DSM 9941 / JCM 11954 / NBRC 16129 / PRD-1), this protein is Lipoyl synthase.